A 43-amino-acid polypeptide reads, in one-letter code: Protein PsbN (43 aa).

The chain crosses the membrane as a helical span at residues alanine 4–tyrosine 24.

Belongs to the PsbN family.

It is found in the plastid. It localises to the chloroplast thylakoid membrane. In terms of biological role, may play a role in photosystem I and II biogenesis. The polypeptide is Protein PsbN (Marchantia polymorpha (Common liverwort)).